The chain runs to 87 residues: MTIFQRTIVVLIGTQLAASAVILFIFDLNSYNHFSGSFSWLHFLKELAGSFAFYLFSAGLFFLLIGLCAPSRKKKRISVHEKENSLK.

2 consecutive transmembrane segments (helical) span residues 8–28 (IVVL…IFDL) and 47–67 (LAGS…LIGL).

It localises to the cell membrane. This is an uncharacterized protein from Bacillus subtilis (strain 168).